A 443-amino-acid polypeptide reads, in one-letter code: Phosphatidate cytidylyltransferase 2 (443 aa).

The segment covering Met1–Ala38 has biased composition (basic and acidic residues). Residues Met1–Pro51 form a disordered region. Residue Ser20 is modified to Phosphoserine. The residue at position 30 (Thr30) is a Phosphothreonine. 3 positions are modified to phosphoserine: Ser32, Ser34, and Ser36. At Thr50 the chain carries Phosphothreonine. The next 6 membrane-spanning stretches (helical) occupy residues Met78–Met98, Trp129–Phe149, His165–Val185, Leu212–Ile232, Gly261–Ser281, and Ser338–Phe358.

Belongs to the CDS family. As to quaternary structure, homodimer.

The protein resides in the endoplasmic reticulum membrane. The catalysed reaction is a 1,2-diacyl-sn-glycero-3-phosphate + CTP + H(+) = a CDP-1,2-diacyl-sn-glycerol + diphosphate. The enzyme catalyses 1-octadecanoyl-2-(5Z,8Z,11Z,14Z-eicosatetraenoyl)-sn-glycero-3-phosphate + CTP + H(+) = 1-octadecanoyl-2-(5Z,8Z,11Z,14Z-eicosatetraenoyl)-sn-glycero-3-cytidine-5'-diphosphate + diphosphate. It carries out the reaction 1-octadecanoyl-2-(9Z,12Z-octadecadienoyl)-sn-glycero-3-phosphate + CTP + H(+) = 1-octadecanoyl-2-(9Z,12Z-octadecadienoyl)-sn-glycero-3-cytidine-5'-diphosphate + diphosphate. It catalyses the reaction 1-hexadecanoyl-2-(5Z,8Z,11Z,14Z-eicosatetraenoyl)-sn-glycero-3-phosphate + CTP + H(+) = 1-hexadecanoyl-2-(5Z,8Z,11Z,14Z-eicosatetraenoyl)-sn-glycero-3-cytidine-5'-diphosphate + diphosphate. The catalysed reaction is 1,2-di-(5Z,8Z,11Z,14Z)-eicosatetraenoyl-sn-glycero-3-phosphate + CTP + H(+) = 1,2-di-(5Z,8Z,11Z,14Z-eicosatetraenoyl)-sn-glycero-3-cytidine-5'-diphosphate + diphosphate. The enzyme catalyses 1-octadecanoyl-2-(9Z-octadecenoyl)-sn-glycero-3-phosphate + CTP + H(+) = 1-octadecanoyl-2-(9Z-octadecenoyl)-sn-glycero-3-cytidine-5'-diphosphate + diphosphate. It carries out the reaction 1-octadecanoyl-2-(4Z,7Z,10Z,13Z,16Z,19Z-docosahexaenoyl)-sn-glycero-3-phosphate + CTP + H(+) = 1-octadecanoyl-2-(4Z,7Z,10Z,13Z,16Z,19Z-docosahexaenoyl)-sn-glycero-3-cytidine-5'-diphosphate + diphosphate. It catalyses the reaction 1,2-di-(9Z,12Z-octadecadienoyl)-sn-glycero-3-phosphate + CTP + H(+) = 1,2-di-(9Z,12Z-octadecadienoyl)-sn-glycero-3-cytidine-5'-diphosphate + diphosphate. The catalysed reaction is 1,2-di-(9Z-octadecenoyl)-sn-glycero-3-phosphate + CTP + H(+) = 1,2-di-(9Z-octadecenoyl)-sn-glycero-3-cytidine-5'-diphosphate + diphosphate. Its pathway is phospholipid metabolism; CDP-diacylglycerol biosynthesis; CDP-diacylglycerol from sn-glycerol 3-phosphate: step 3/3. In terms of biological role, catalyzes the conversion of phosphatidic acid (PA) to CDP-diacylglycerol (CDP-DAG), an essential intermediate in the synthesis of phosphatidylglycerol, cardiolipin and phosphatidylinositol. Exhibits specificity for the nature of the acyl chains at the sn-1 and sn-2 positions in the substrate, PA and the preferred acyl chain composition is 1-stearoyl-2-arachidonoyl-sn-phosphatidic acid. Plays an important role in regulating the growth and maturation of lipid droplets which are storage organelles at the center of lipid and energy homeostasis. The chain is Phosphatidate cytidylyltransferase 2 from Rattus norvegicus (Rat).